Here is a 588-residue protein sequence, read N- to C-terminus: Putative calcium-binding mitochondrial carrier F55A11.4 (588 aa).

Residues 1 to 14 (MINKNEQTESTSGA) show a composition bias toward polar residues. Residues 1 to 25 (MINKNEQTESTSGAAEQKEDDEEQY) are disordered. EF-hand domains are found at residues 73–108 (EKER…ETPH), 109–139 (IPAN…SYVL), 140–175 (ENEQ…IGVP), and 176–211 (LDDH…YPSS). Ca(2+)-binding residues include Asp86, Asp88, Asp90, Thr92, and Asp97. Residues Asp153, Asn155, Asp157, and Glu164 each coordinate Ca(2+). Solcar repeat units lie at residues 246-332 (GIWW…LKRL), 342-428 (ISTF…LKRT), and 440-529 (PGVL…VRTG). 6 consecutive transmembrane segments (helical) span residues 252–269 (LVAG…TAPF), 307–326 (GNGI…FMCY), 352–365 (SAAG…IYPM), 403–422 (GYLP…LAIY), 446–463 (LACG…SYPF), and 504–523 (GITP…YVVY).

It belongs to the mitochondrial carrier (TC 2.A.29) family. Homodimer (via N-terminus).

Its subcellular location is the mitochondrion inner membrane. Functionally, mitochondrial and calcium-binding carrier that catalyzes the calcium-dependent exchange of cytoplasmic glutamate with mitochondrial aspartate across the mitochondrial inner membrane. The polypeptide is Putative calcium-binding mitochondrial carrier F55A11.4 (Caenorhabditis elegans).